The sequence spans 258 residues: Protein SAWADEE HOMEODOMAIN HOMOLOG 1 (258 aa).

The SAWADEE domain stretch occupies residues 138–244 (AWYDVSSFLT…LVRYELDNTE (107 aa)). Zn(2+) is bound by residues Cys-191, His-225, Cys-230, and Cys-232.

In terms of assembly, associates with the RNA polymerase IV (Pol IV) complex. Interacts with NRPD1, NRPD2, NRPD3, NRPD3B, CLSY1 and CLSY2.

The protein resides in the nucleus. Involved in RNA-directed DNA methylation (RdDM). Required for the silencing of some endogenous RdDM targets and accumulation of 24-nt siRNAs, but not for the production of Pol V-dependent transcripts. Functions in transcriptional silencing through both DNA methylation-dependent and -independent pathways. Required for both maintenance and de-novo DNA methylation. Plays a role in the recruitment of Pol IV to genomic regions associated with K9 methylated histone H3 that are targets for RdDM. This Arabidopsis thaliana (Mouse-ear cress) protein is Protein SAWADEE HOMEODOMAIN HOMOLOG 1 (SHH1).